Reading from the N-terminus, the 219-residue chain is Inner membrane protein YccA (219 aa).

The Periplasmic portion of the chain corresponds to 1–22 (MDRIVSSSHDRTSLLSTHKVLR). 2 consecutive transmembrane segments (helical) span residues 23–43 (NTYF…TAST) and 44–64 (VLML…GLMF). Topologically, residues 65–73 (LTYKTANKP) are periplasmic. A helical transmembrane segment spans residues 74–94 (TGIISAFAFTGFLGYILGPIL). Residues 95-104 (NTYLSAGMGD) are Cytoplasmic-facing. A helical transmembrane segment spans residues 105–125 (VIAMALGGTALVFFCCSAYVL). Residues 126-133 (TTRKDMSF) are Periplasmic-facing. The chain crosses the membrane as a helical span at residues 134–154 (LGGMLMAGIVVVLIGMVANIF). The Cytoplasmic segment spans residues 155 to 157 (LQL). The helical transmembrane segment at 158–178 (PALHLAISAVFILISSGAILF) threads the bilayer. At 179–195 (ETSNIIHGGETNYIRAT) the chain is on the periplasmic side. A helical transmembrane segment spans residues 196 to 216 (VSLYVSLYNIFVSLLSILGFA). Topologically, residues 217–219 (SRD) are cytoplasmic.

The protein belongs to the BI1 family.

Its subcellular location is the cell inner membrane. The sequence is that of Inner membrane protein YccA (yccA) from Escherichia coli O6:H1 (strain CFT073 / ATCC 700928 / UPEC).